Reading from the N-terminus, the 311-residue chain is uncharacterized protein (311 aa).

This is an uncharacterized protein from Mycoplasma genitalium (strain ATCC 33530 / DSM 19775 / NCTC 10195 / G37) (Mycoplasmoides genitalium).